Consider the following 191-residue polypeptide: GDP-mannose pyrophosphatase (191 aa).

Residues 38–40 (IRE), Arg-67, and 85–87 (AGL) contribute to the GDP-alpha-D-mannose site. Positions 43 to 180 (DRGNGATILL…RIKDGKTIML (138 aa)) constitute a Nudix hydrolase domain. Mg(2+) is bound by residues Ala-85, Glu-100, and Glu-104. A Nudix box motif is present at residues 86–106 (GLLDNDSPEECIRREAMEETG). GDP-alpha-D-mannose is bound by residues Glu-104, Glu-127, 150–151 (DE), and Lys-176. Glu-151 serves as a coordination point for Mg(2+).

Belongs to the Nudix hydrolase family. NudK subfamily. In terms of assembly, homodimer. Requires Mg(2+) as cofactor.

It catalyses the reaction GDP-alpha-D-mannose + H2O = alpha-D-mannose 1-phosphate + GMP + 2 H(+). In terms of biological role, nucleoside diphosphate sugar hydrolase that hydrolyzes GDP-mannose as its preferred substrate, yielding GMP and mannose-1-phosphate. The chain is GDP-mannose pyrophosphatase (nudK) from Yersinia enterocolitica serotype O:8 / biotype 1B (strain NCTC 13174 / 8081).